The following is a 279-amino-acid chain: 3-methyl-2-oxobutanoate hydroxymethyltransferase 2 (279 aa).

2 residues coordinate Mg(2+): Asp58 and Asp97. Residues 58–59 (DS), Asp97, and Lys126 each bind 3-methyl-2-oxobutanoate. Residue Glu128 coordinates Mg(2+). The Proton acceptor role is filled by Glu195.

This sequence belongs to the PanB family. In terms of assembly, homodecamer; pentamer of dimers. The cofactor is Mg(2+).

The protein resides in the cytoplasm. The enzyme catalyses 3-methyl-2-oxobutanoate + (6R)-5,10-methylene-5,6,7,8-tetrahydrofolate + H2O = 2-dehydropantoate + (6S)-5,6,7,8-tetrahydrofolate. It functions in the pathway cofactor biosynthesis; (R)-pantothenate biosynthesis; (R)-pantoate from 3-methyl-2-oxobutanoate: step 1/2. Catalyzes the reversible reaction in which hydroxymethyl group from 5,10-methylenetetrahydrofolate is transferred onto alpha-ketoisovalerate to form ketopantoate. The protein is 3-methyl-2-oxobutanoate hydroxymethyltransferase 2 of Methylibium petroleiphilum (strain ATCC BAA-1232 / LMG 22953 / PM1).